A 160-amino-acid polypeptide reads, in one-letter code: Cytochrome b6-f complex subunit 4 (160 aa).

Transmembrane regions (helical) follow at residues 36–56, 95–115, and 131–151; these read LLYI…GLAV, LLGV…PFIE, and ILFL…TFPI.

The protein belongs to the cytochrome b family. PetD subfamily. In terms of assembly, the 4 large subunits of the cytochrome b6-f complex are cytochrome b6, subunit IV (17 kDa polypeptide, petD), cytochrome f and the Rieske protein, while the 4 small subunits are petG, petL, petM and petN. The complex functions as a dimer.

It is found in the plastid. The protein localises to the chloroplast thylakoid membrane. Its function is as follows. Component of the cytochrome b6-f complex, which mediates electron transfer between photosystem II (PSII) and photosystem I (PSI), cyclic electron flow around PSI, and state transitions. The protein is Cytochrome b6-f complex subunit 4 of Chlamydomonas moewusii (Chlamydomonas eugametos).